Consider the following 171-residue polypeptide: Zinc finger A20 and AN1 domain-containing stress-associated protein 8 (171 aa).

The A20-type zinc finger occupies 11 to 45 (PEGPILCINNCGFFGSAATMNMCSKCHKEMIMKQE). Zn(2+) is bound by residues Cys-17, Cys-21, Cys-33, Cys-36, Cys-112, Cys-115, Cys-126, Cys-128, Cys-133, His-136, His-142, and Cys-144. Residues 106-152 (REGPNRCSTCRKRVGLTGFNCRCGNLYCAMHRYSDKHDCQFDYRTAA) form an AN1-type zinc finger.

Functionally, may be involved in environmental stress response. The polypeptide is Zinc finger A20 and AN1 domain-containing stress-associated protein 8 (SAP8) (Oryza sativa subsp. indica (Rice)).